Reading from the N-terminus, the 822-residue chain is Calpain-3 (822 aa).

The tract at residues 1–36 is disordered; it reads MPTVISASVAPRTGAEPMSPGPIAQAAQDKGTEAGG. The Calpain catalytic domain occupies 74 to 418; that stretch reads LFVDPEFPPD…FTKLEICNLT (345 aa). Residues C129, H335, and N359 contribute to the active site. Positions 419-587 are domain III; that stretch reads ADALESDKLQ…KRNLSEEVEN (169 aa). A linker region spans residues 588–650; that stretch reads TISVDRPVKK…EPGNTDQESE (63 aa). A disordered region spans residues 604-652; the sequence is IFVSDRANSNKELGVDQETEEGKDNTSPDKQAKSPQLEPGNTDQESEEQ. A compositionally biased stretch (basic and acidic residues) spans 623–635; it reads EEGKDNTSPDKQA. 4 EF-hand domains span residues 650 to 684, 693 to 726, 723 to 758, and 788 to 822; these read EEQR…VVNK, FTLE…KKIK, KKIK…AGFH, and VRLE…TMYA. Positions 651–822 are domain IV; sequence EQRQFRNIFR…LEWLQLTMYA (172 aa). Ca(2+) contacts are provided by A663, D666, E668, E673, D706, D708, S710, R712, E717, D736, D738, S740, T742, E747, D801, D803, D805, and I807.

It belongs to the peptidase C2 family. Homodimer; via EF-hand domain 4. Interacts with TTN/titin. Interacts with CMYA5; this interaction, which results in CMYA5 proteolysis, may protect CAPN3 from autolysis. Interacts with SIMC1. Interacts with UTP25; the interaction is required for CAPN3 translocation to the nucleolus. In terms of tissue distribution, skeletal muscle.

It is found in the cytoplasm. The protein localises to the nucleus. Its subcellular location is the nucleolus. The catalysed reaction is Broad endopeptidase activity.. With respect to regulation, activated by micromolar concentrations of calcium and inhibited by calpastatin. In terms of biological role, calcium-regulated non-lysosomal thiol-protease. Proteolytically cleaves CTBP1. Mediates, with UTP25, the proteasome-independent degradation of p53/TP53. The sequence is that of Calpain-3 (CAPN3) from Bos taurus (Bovine).